The chain runs to 408 residues: tRNA-specific 2-thiouridylase MnmA (408 aa).

ATP-binding positions include 20–27 (AMSGGVDS) and L46. C114 functions as the Nucleophile in the catalytic mechanism. C114 and C210 are disulfide-bonded. G138 lines the ATP pocket. Residues 160–162 (RDQ) form an interaction with tRNA region. The active-site Cysteine persulfide intermediate is C210.

The protein belongs to the MnmA/TRMU family.

The protein localises to the cytoplasm. It carries out the reaction S-sulfanyl-L-cysteinyl-[protein] + uridine(34) in tRNA + AH2 + ATP = 2-thiouridine(34) in tRNA + L-cysteinyl-[protein] + A + AMP + diphosphate + H(+). In terms of biological role, catalyzes the 2-thiolation of uridine at the wobble position (U34) of tRNA, leading to the formation of s(2)U34. In Bartonella quintana (strain Toulouse) (Rochalimaea quintana), this protein is tRNA-specific 2-thiouridylase MnmA.